Consider the following 206-residue polypeptide: Threonine efflux protein (206 aa).

The chain crosses the membrane as a helical span at residues 1–21 (MLMLFLTVAMVHIVALMSPGP). Residues 22–43 (DFFFVSQTAVSRSRKEAMMGVL) are Periplasmic-facing. A helical transmembrane segment spans residues 44–64 (GITCGVMVWAGIALLGLHLII). The Cytoplasmic segment spans residues 65–66 (EK). Residues 67 to 87 (MAWLHTLIMVGGGLYLCWMGY) traverse the membrane as a helical segment. Residues 88–149 (QMLRGALKKE…VGDNVGTTAR (62 aa)) are Periplasmic-facing. Residues 150–173 (WGIFALIIVETLAWFTVVASLFAL) form a helical membrane-spanning segment. The Cytoplasmic segment spans residues 174–206 (PQMRRGYQRLAKWIDGFAGALFAGFGIHLIISR).

Belongs to the Rht family.

The protein resides in the cell inner membrane. Its function is as follows. Conducts the efflux of threonine. This is Threonine efflux protein (rhtC) from Escherichia coli O157:H7.